A 198-amino-acid polypeptide reads, in one-letter code: 7-methyl-GTP pyrophosphatase (198 aa).

The active-site Proton acceptor is the D75.

The protein belongs to the Maf family. YceF subfamily. The cofactor is a divalent metal cation.

It is found in the cytoplasm. The enzyme catalyses N(7)-methyl-GTP + H2O = N(7)-methyl-GMP + diphosphate + H(+). In terms of biological role, nucleoside triphosphate pyrophosphatase that hydrolyzes 7-methyl-GTP (m(7)GTP). May have a dual role in cell division arrest and in preventing the incorporation of modified nucleotides into cellular nucleic acids. The chain is 7-methyl-GTP pyrophosphatase from Bartonella henselae (strain ATCC 49882 / DSM 28221 / CCUG 30454 / Houston 1) (Rochalimaea henselae).